A 144-amino-acid polypeptide reads, in one-letter code: Superoxide dismutase [Mn] 1 (144 aa).

3 residues coordinate Mn(2+): H42, D124, and H128.

This sequence belongs to the iron/manganese superoxide dismutase family. Mn(2+) serves as cofactor.

It carries out the reaction 2 superoxide + 2 H(+) = H2O2 + O2. Its function is as follows. Destroys superoxide anion radicals which are normally produced within the cells and which are toxic to biological systems. This chain is Superoxide dismutase [Mn] 1 (sod1), found in Haloferax mediterranei (Halobacterium mediterranei).